The primary structure comprises 294 residues: tRNA dimethylallyltransferase (294 aa).

10–17 (GPTAVGKT) contacts ATP. A substrate-binding site is contributed by 12 to 17 (TAVGKT). The tract at residues 35 to 38 (DSQQ) is interaction with substrate tRNA.

It belongs to the IPP transferase family. In terms of assembly, monomer. The cofactor is Mg(2+).

The catalysed reaction is adenosine(37) in tRNA + dimethylallyl diphosphate = N(6)-dimethylallyladenosine(37) in tRNA + diphosphate. In terms of biological role, catalyzes the transfer of a dimethylallyl group onto the adenine at position 37 in tRNAs that read codons beginning with uridine, leading to the formation of N6-(dimethylallyl)adenosine (i(6)A). The polypeptide is tRNA dimethylallyltransferase (Streptococcus sanguinis (strain SK36)).